Here is a 654-residue protein sequence, read N- to C-terminus: Threonine--tRNA ligase (654 aa).

The region spanning 1-63 (MAQISLTFPD…DADASIAIHT (63 aa)) is the TGS domain. The catalytic stretch occupies residues 247–544 (DHRKLGREMN…LIENFAGKLP (298 aa)). Positions 344, 395, and 521 each coordinate Zn(2+).

The protein belongs to the class-II aminoacyl-tRNA synthetase family. Homodimer. The cofactor is Zn(2+).

The protein localises to the cytoplasm. It catalyses the reaction tRNA(Thr) + L-threonine + ATP = L-threonyl-tRNA(Thr) + AMP + diphosphate + H(+). Its function is as follows. Catalyzes the attachment of threonine to tRNA(Thr) in a two-step reaction: L-threonine is first activated by ATP to form Thr-AMP and then transferred to the acceptor end of tRNA(Thr). Also edits incorrectly charged L-seryl-tRNA(Thr). The polypeptide is Threonine--tRNA ligase (Dinoroseobacter shibae (strain DSM 16493 / NCIMB 14021 / DFL 12)).